Reading from the N-terminus, the 251-residue chain is uncharacterized protein (251 aa).

A disordered region spans residues Ala207–Arg251.

This is an uncharacterized protein from Treponema pallidum (strain Nichols).